The sequence spans 122 residues: Large ribosomal subunit protein uL14 (122 aa).

This sequence belongs to the universal ribosomal protein uL14 family. Part of the 50S ribosomal subunit. Forms a cluster with proteins L3 and L19. In the 70S ribosome, L14 and L19 interact and together make contacts with the 16S rRNA in bridges B5 and B8.

In terms of biological role, binds to 23S rRNA. Forms part of two intersubunit bridges in the 70S ribosome. The chain is Large ribosomal subunit protein uL14 from Mycoplasmopsis agalactiae (strain NCTC 10123 / CIP 59.7 / PG2) (Mycoplasma agalactiae).